Reading from the N-terminus, the 116-residue chain is Protein Rev (116 aa).

Ser5 and Ser8 each carry phosphoserine; by host CK2. The homomultimerization stretch occupies residues 18–26; the sequence is LIKFLYQSN. The tract at residues 23-48 is disordered; that stretch reads YQSNPPPKPEGTRQARRNRRRRWRER. The short motif at 34–50 is the Nuclear localization signal and RNA-binding (RRE) element; that stretch reads TRQARRNRRRRWRERQR. Residues 36–47 are compositionally biased toward basic residues; the sequence is QARRNRRRRWRE. A Nuclear export signal and binding to XPO1 motif is present at residues 73–84; that stretch reads LQLPPLERLTLD. Phosphoserine; by host occurs at positions 92 and 99. The segment at 92-116 is disordered; it reads SGTQGVGSPQILVESPTVLESGTKE.

Belongs to the HIV-1 REV protein family. Homomultimer; when bound to the RRE. Multimeric assembly is essential for activity and may involve XPO1. Binds to human KPNB1, XPO1, TNPO1, RANBP5 and IPO7. Interacts with the viral Integrase. Interacts with human KHDRBS1. Interacts with human NAP1; this interaction decreases Rev multimerization and stimulates its activity. Interacts with human DEAD-box helicases DDX3 and DDX24; these interactions may serve for viral RNA export to the cytoplasm and packaging, respectively. Interacts with human PSIP1; this interaction may inhibit HIV-1 DNA integration by promoting dissociation of the Integrase-LEDGF/p75 complex. Asymmetrically arginine dimethylated at one site by host PRMT6. Methylation impairs the RNA-binding activity and export of viral RNA from the nucleus to the cytoplasm. Post-translationally, phosphorylated by protein kinase CK2. Presence of, and maybe binding to the N-terminus of the regulatory beta subunit of CK2 is necessary for CK2-mediated Rev's phosphorylation.

The protein resides in the host nucleus. The protein localises to the host nucleolus. It is found in the host cytoplasm. Its function is as follows. Escorts unspliced or incompletely spliced viral pre-mRNAs (late transcripts) out of the nucleus of infected cells. These pre-mRNAs carry a recognition sequence called Rev responsive element (RRE) located in the env gene, that is not present in fully spliced viral mRNAs (early transcripts). This function is essential since most viral proteins are translated from unspliced or partially spliced pre-mRNAs which cannot exit the nucleus by the pathway used by fully processed cellular mRNAs. Rev itself is translated from a fully spliced mRNA that readily exits the nucleus. Rev's nuclear localization signal (NLS) binds directly to KPNB1/Importin beta-1 without previous binding to KPNA1/Importin alpha-1. KPNB1 binds to the GDP bound form of RAN (Ran-GDP) and targets Rev to the nucleus. In the nucleus, the conversion from Ran-GDP to Ran-GTP dissociates Rev from KPNB1 and allows Rev's binding to the RRE in viral pre-mRNAs. Rev multimerization on the RRE via cooperative assembly exposes its nuclear export signal (NES) to the surface. Rev can then form a complex with XPO1/CRM1 and Ran-GTP, leading to nuclear export of the complex. Conversion from Ran-GTP to Ran-GDP mediates dissociation of the Rev/RRE/XPO1/RAN complex, so that Rev can return to the nucleus for a subsequent round of export. Beside KPNB1, also seems to interact with TNPO1/Transportin-1, RANBP5/IPO5 and IPO7/RANBP7 for nuclear import. The nucleoporin-like HRB/RIP is an essential cofactor that probably indirectly interacts with Rev to release HIV RNAs from the perinuclear region to the cytoplasm. The polypeptide is Protein Rev (Human immunodeficiency virus type 1 group M subtype B (isolate SC) (HIV-1)).